The sequence spans 337 residues: Inositol 2-dehydrogenase (337 aa).

This sequence belongs to the Gfo/Idh/MocA family. Homotetramer.

It catalyses the reaction myo-inositol + NAD(+) = scyllo-inosose + NADH + H(+). Involved in the oxidation of myo-inositol (MI) to 2-keto-myo-inositol (2KMI or 2-inosose). The sequence is that of Inositol 2-dehydrogenase from Ralstonia nicotianae (strain ATCC BAA-1114 / GMI1000) (Ralstonia solanacearum).